A 365-amino-acid polypeptide reads, in one-letter code: Flagellar P-ring protein (365 aa).

An N-terminal signal peptide occupies residues 1-19 (MMLSLCAIAGLLLAPSIQA).

The protein belongs to the FlgI family. In terms of assembly, the basal body constitutes a major portion of the flagellar organelle and consists of four rings (L,P,S, and M) mounted on a central rod.

It localises to the periplasm. It is found in the bacterial flagellum basal body. Assembles around the rod to form the L-ring and probably protects the motor/basal body from shearing forces during rotation. The polypeptide is Flagellar P-ring protein (Sodalis glossinidius (strain morsitans)).